Reading from the N-terminus, the 685-residue chain is N(6)-adenosine-methyltransferase MT-A70-like (685 aa).

Residues 464–465 (DI) and Asp482 contribute to the S-adenosyl-L-methionine site. Positions 552–565 (RIIRTGRTGHWLNH) are positively charged region required for RNA-binding. S-adenosyl-L-methionine contacts are provided by residues Lys599, 622–625 (RMHN), and 635–636 (NQ). The tract at residues 657-685 (EIDVQPPSPPRASAMETDNEPMAIDSITA) is disordered. Phosphoserine is present on Ser664.

The protein belongs to the MT-A70-like family. As to quaternary structure, interacts with FIP37. Interacts with MTB. Associates with MTB, FIP37, VIR and HAKAI to form the m6A writer complex which is essential for adenosine methylation at specific mRNA sequences.

It localises to the nucleus. The enzyme catalyses an adenosine in mRNA + S-adenosyl-L-methionine = an N(6)-methyladenosine in mRNA + S-adenosyl-L-homocysteine + H(+). In terms of biological role, catalytic subunit of the N6-methyltransferase complex, a multiprotein complex that mediates N6-methyladenosine (m6A) methylation at the 5'-[AG]GAC-3' consensus sites of some mRNAs. Associates with MTB, FIP37, VIR and HAKAI to form the m6A writer complex which is essential for adenosine methylation at specific mRNA sequences. N6-methyladenosine (m6A) plays a role in mRNA stability, processing, translation efficiency and editing. The protein is N(6)-adenosine-methyltransferase MT-A70-like of Arabidopsis thaliana (Mouse-ear cress).